A 548-amino-acid chain; its full sequence is MAAKDVKFSGDARQRMLRGVDILADAVKVTLGPKGRNVVIERSFGAPRITKDGVTVAKEIELEDRFENMGAQMVREVASKTNDLAGDGTTTATVLAQAIVREGAKAVAAGMNPMDLKRGIDIAVAAVVKDIGKRAKAVASSAEVAQVGTISSNGDASIGKMIAQAMQKVGNDGVITVEENKSLETDVDIVEGMKFDRGYLSPYFVTNAEKMAAELDDAYILLHEKKLTGLQALLPVLEAVVKSGKPLLIVAEDVEGEALAALVVNRLRGGLKVAAVKAPGFGDRRKAMLEDIAILTSGQLISDELGMKLENVTLNMLGRAKKVLIDKENTTIVNGAGKKKDIEARVGQIRARIEETTSDYDREKLQERLAKLAGGVAVIRVGGATEIEVKEKKDRVEDALNATRAAVEEGIVPGGGTALLRARKAVGRINNDNSDVQAGINIVLKALEAPIRQIAENAGVEGSIVVGKILENKTETFGFDAQKEEYVDMVAKGIIDPAKVVRTALQDASSIAGLLVTTEAMVAELPKDEPPAMPAGGGGMGGMGGMGF.

ATP contacts are provided by residues 30–33, Lys51, 87–91, Gly415, and Asp496; these read TLGP and DGTTT.

This sequence belongs to the chaperonin (HSP60) family. As to quaternary structure, forms a cylinder of 14 subunits composed of two heptameric rings stacked back-to-back. Interacts with the co-chaperonin GroES.

It is found in the cytoplasm. It catalyses the reaction ATP + H2O + a folded polypeptide = ADP + phosphate + an unfolded polypeptide.. Together with its co-chaperonin GroES, plays an essential role in assisting protein folding. The GroEL-GroES system forms a nano-cage that allows encapsulation of the non-native substrate proteins and provides a physical environment optimized to promote and accelerate protein folding. This is Chaperonin GroEL 3 from Nitrobacter winogradskyi (strain ATCC 25391 / DSM 10237 / CIP 104748 / NCIMB 11846 / Nb-255).